Consider the following 550-residue polypeptide: MAAKDVKFGNEARVKMLRGVNVLADAVKVTLGPKGRNVVLDKSFGAPSITKDGVSVAREIELEDKFENMGAQMVKEVASKANDAAGDGTTTATLLAQAIVNEGLKAVAAGMNPMDLKRGIDKAVISAVEELRIMSVPCADSKAITQVGTISANADEKVGSLIADAMDKVGKDGVITVEEGTGLQDELEVVKGMQFDRGYLSPYFINKPETGIVELENPYILMADKKISNVRELLPILEAVAKSGKPLLIISEDLEGEALATLVVNSMRGIVKVAAVKAPGFGDRRKAMLQDISILTSGSVISEELAMELEKSTLEDLGQAKRVVINKDTTTIIGGIGEKYNIQSRISQIRQQIQEATSDYDKEKLNERLAKLSGGVAVLKVGAATEVEMKEKKARVEDALHATRAAVEEGVVPGGGVALVRVAAKISNIVGQNEDQNVGIRVALRAMEAPLRQIVSNSGEEPSVVTNNVKDGKGNYGYNAATDEYGDMISFGILDPTKVTRSALQYASSVAGLMITTECMVTDLPKDEKSDLGNSSAPSAGGMGGMGGMM.

ATP is bound by residues 30 to 33, lysine 51, 87 to 91, glycine 415, 479 to 481, and aspartate 495; these read TLGP, DGTTT, and NAA. The interval 526–550 is disordered; that stretch reads KDEKSDLGNSSAPSAGGMGGMGGMM. The span at 541-550 shows a compositional bias: gly residues; sequence GGMGGMGGMM.

This sequence belongs to the chaperonin (HSP60) family. As to quaternary structure, forms a cylinder of 14 subunits composed of two heptameric rings stacked back-to-back. Interacts with the co-chaperonin GroES.

The protein resides in the cytoplasm. It carries out the reaction ATP + H2O + a folded polypeptide = ADP + phosphate + an unfolded polypeptide.. Functionally, together with its co-chaperonin GroES, plays an essential role in assisting protein folding. The GroEL-GroES system forms a nano-cage that allows encapsulation of the non-native substrate proteins and provides a physical environment optimized to promote and accelerate protein folding. This is Chaperonin GroEL from Buchnera aphidicola subsp. Baizongia pistaciae (strain Bp).